The sequence spans 297 residues: Acetyl-coenzyme A carboxylase carboxyl transferase subunit beta (297 aa).

The interval 1–23 (MSWIERILGRTSSSSSSSKSKVP) is disordered. The CoA carboxyltransferase N-terminal domain occupies 26–295 (VWTKCTSCEQ…PFKTAELIVE (270 aa)). 4 residues coordinate Zn(2+): C30, C33, C49, and C52. A C4-type zinc finger spans residues 30 to 52 (CTSCEQVLYSEELKRNMHVCPKC).

This sequence belongs to the AccD/PCCB family. As to quaternary structure, acetyl-CoA carboxylase is a heterohexamer composed of biotin carboxyl carrier protein (AccB), biotin carboxylase (AccC) and two subunits each of ACCase subunit alpha (AccA) and ACCase subunit beta (AccD). It depends on Zn(2+) as a cofactor.

It is found in the cytoplasm. It carries out the reaction N(6)-carboxybiotinyl-L-lysyl-[protein] + acetyl-CoA = N(6)-biotinyl-L-lysyl-[protein] + malonyl-CoA. The protein operates within lipid metabolism; malonyl-CoA biosynthesis; malonyl-CoA from acetyl-CoA: step 1/1. Its function is as follows. Component of the acetyl coenzyme A carboxylase (ACC) complex. Biotin carboxylase (BC) catalyzes the carboxylation of biotin on its carrier protein (BCCP) and then the CO(2) group is transferred by the transcarboxylase to acetyl-CoA to form malonyl-CoA. The protein is Acetyl-coenzyme A carboxylase carboxyl transferase subunit beta of Actinobacillus pleuropneumoniae serotype 5b (strain L20).